The sequence spans 124 residues: MRFQFKRRLSPRKRRHLRVRAKVFGTPERPRLNVFRSNKHIYAQIIDDTRGHTLVAASTLEKEVRERFPDPHPKIEEARIVGQVVGERALAKGITRVVFDRGGYKYHGRVKALADGARAAGLQF.

This sequence belongs to the universal ribosomal protein uL18 family. As to quaternary structure, part of the 50S ribosomal subunit; part of the 5S rRNA/L5/L18/L25 subcomplex. Contacts the 5S and 23S rRNAs.

This is one of the proteins that bind and probably mediate the attachment of the 5S RNA into the large ribosomal subunit, where it forms part of the central protuberance. The polypeptide is Large ribosomal subunit protein uL18 (Thermomicrobium roseum (strain ATCC 27502 / DSM 5159 / P-2)).